The chain runs to 546 residues: ATP synthase subunit alpha (546 aa).

An ATP-binding site is contributed by 172 to 179 (GDRKTGKT). Polar residues-rich tracts occupy residues 511–520 (FRTTEGNNLG) and 536–546 (TELNVSRKTAK). Residues 511–546 (FRTTEGNNLGTEAPVDPLAADDVNKTELNVSRKTAK) form a disordered region.

It belongs to the ATPase alpha/beta chains family. In terms of assembly, F-type ATPases have 2 components, CF(1) - the catalytic core - and CF(0) - the membrane proton channel. CF(1) has five subunits: alpha(3), beta(3), gamma(1), delta(1), epsilon(1). CF(0) has three main subunits: a(1), b(2) and c(9-12). The alpha and beta chains form an alternating ring which encloses part of the gamma chain. CF(1) is attached to CF(0) by a central stalk formed by the gamma and epsilon chains, while a peripheral stalk is formed by the delta and b chains.

It localises to the cell membrane. The enzyme catalyses ATP + H2O + 4 H(+)(in) = ADP + phosphate + 5 H(+)(out). Produces ATP from ADP in the presence of a proton gradient across the membrane. The alpha chain is a regulatory subunit. In Corynebacterium aurimucosum (strain ATCC 700975 / DSM 44827 / CIP 107346 / CN-1) (Corynebacterium nigricans), this protein is ATP synthase subunit alpha.